The following is a 430-amino-acid chain: Dihydroorotase (430 aa).

His-60 and His-62 together coordinate Zn(2+). Residues 62–64 (HFR) and Asn-94 each bind substrate. Zn(2+) is bound by residues Asp-151, His-178, and His-231. A substrate-binding site is contributed by Asn-277. Asp-304 lines the Zn(2+) pocket. Asp-304 is an active-site residue. Substrate is bound by residues His-308 and 322–323 (FG).

The protein belongs to the metallo-dependent hydrolases superfamily. DHOase family. Class I DHOase subfamily. Zn(2+) is required as a cofactor.

It catalyses the reaction (S)-dihydroorotate + H2O = N-carbamoyl-L-aspartate + H(+). Its pathway is pyrimidine metabolism; UMP biosynthesis via de novo pathway; (S)-dihydroorotate from bicarbonate: step 3/3. Functionally, catalyzes the reversible cyclization of carbamoyl aspartate to dihydroorotate. This is Dihydroorotase from Carboxydothermus hydrogenoformans (strain ATCC BAA-161 / DSM 6008 / Z-2901).